The chain runs to 434 residues: MKVVIFGSSGDLAKRKLFPALSRIDLEGVGVVGYARTKYNIEFSEVLQEVGNYSPEFLSKVTYIPGPYDDLSKLKEVSDSETVLYFSVPSSVYTCLFREISKLDYKVIGVEKPYGDSIESFMEIKGFDLGKTRFIDHYLLKPLVVAMPGIIRETGAIREVMSNRYVKSVEIVSKEVLGGEGRHYFDKNGIIRDMVLSHMGELLGVVASDVTKPSRIMEALARMEVFKACTVDTERCIYGQYDDYIKEIHKDSSTETFCMVPISIGTPRWSKVPFIIVAGKGMNEKRTEIILEFRRDVFAKCIELFSMPRQSSCRIVHTNEIETVRLVFNIYPECEVFLEVLVGGEPVRYVLHDKKEIDGLMHDSYGGYHDYEIIFDSLVRGKDFSSVSSQEAELLWKVFNPILSISKEDMLFYYSKGIDMPKEAEEMIREIKDH.

NADP(+) contacts are provided by residues 7–14 (GSSGDLAK), arginine 36, tyrosine 93, and lysine 112. D-glucose 6-phosphate-binding positions include lysine 112, 137–141 (HYLLK), glutamate 175, and aspartate 193. Histidine 198 (proton acceptor) is an active-site residue. Lysine 280 and lysine 285 together coordinate D-glucose 6-phosphate. Arginine 286 lines the NADP(+) pocket.

Belongs to the glucose-6-phosphate dehydrogenase family.

The catalysed reaction is D-glucose 6-phosphate + NADP(+) = 6-phospho-D-glucono-1,5-lactone + NADPH + H(+). It functions in the pathway carbohydrate degradation; pentose phosphate pathway; D-ribulose 5-phosphate from D-glucose 6-phosphate (oxidative stage): step 1/3. In terms of biological role, catalyzes the rate-limiting step of the oxidative pentose-phosphate pathway, which represents a route for the dissimilation of carbohydrates besides glycolysis. The main function of this enzyme is to provide reducing power (NADPH) and pentose phosphates for fatty acid and nucleic acid synthesis. The sequence is that of Glucose-6-phosphate 1-dehydrogenase (ZWF1) from Encephalitozoon cuniculi (strain GB-M1) (Microsporidian parasite).